The sequence spans 504 residues: Ent-kaurene oxidase-like 3 (504 aa).

A helical transmembrane segment spans residues 3–23 (SLLAAGAGGIGVAAAAVGGFI). Residue C448 participates in heme binding.

The protein belongs to the cytochrome P450 family. Heme serves as cofactor. In terms of tissue distribution, expressed in leaf blades.

Its subcellular location is the membrane. In terms of biological role, may hydroxylate diterpenes. The sequence is that of Ent-kaurene oxidase-like 3 from Oryza sativa subsp. japonica (Rice).